Here is a 474-residue protein sequence, read N- to C-terminus: Sporulation-specific protein 6 (474 aa).

Residues 125–178 (RLAFPNFIFYFDNVDEEIKRRVTQKINNLGAKVATLFTFEVTHFITTRTTDPEM) form the BRCT domain. The segment at 421–470 (IETKSGYCENCCERYKDLERHLGGKHHRRFAEKDENFQGLDDLFLLIRRP) adopts a DBF4-type zinc-finger fold. Positions 428, 431, 441, and 447 each coordinate Zn(2+).

The protein localises to the nucleus. In terms of biological role, may act as a kinase regulator. Essential for progression of meiosis II and sporulation. In Schizosaccharomyces pombe (strain 972 / ATCC 24843) (Fission yeast), this protein is Sporulation-specific protein 6 (spo6).